Reading from the N-terminus, the 61-residue chain is Small ribosomal subunit protein uS14 (61 aa).

Cys-24, Cys-27, Cys-40, and Cys-43 together coordinate Zn(2+).

Belongs to the universal ribosomal protein uS14 family. Zinc-binding uS14 subfamily. Part of the 30S ribosomal subunit. Contacts proteins S3 and S10. Requires Zn(2+) as cofactor.

In terms of biological role, binds 16S rRNA, required for the assembly of 30S particles and may also be responsible for determining the conformation of the 16S rRNA at the A site. In Limosilactobacillus fermentum (strain NBRC 3956 / LMG 18251) (Lactobacillus fermentum), this protein is Small ribosomal subunit protein uS14.